A 306-amino-acid polypeptide reads, in one-letter code: Pantothenate kinase (306 aa).

G91–S98 lines the ATP pocket.

The protein belongs to the prokaryotic pantothenate kinase family.

It is found in the cytoplasm. The enzyme catalyses (R)-pantothenate + ATP = (R)-4'-phosphopantothenate + ADP + H(+). Its pathway is cofactor biosynthesis; coenzyme A biosynthesis; CoA from (R)-pantothenate: step 1/5. The protein is Pantothenate kinase of Streptococcus pneumoniae serotype 2 (strain D39 / NCTC 7466).